The primary structure comprises 370 residues: Histidinol-phosphate aminotransferase 2 (370 aa).

At Lys-230 the chain carries N6-(pyridoxal phosphate)lysine.

The protein belongs to the class-II pyridoxal-phosphate-dependent aminotransferase family. Histidinol-phosphate aminotransferase subfamily. In terms of assembly, homodimer. Pyridoxal 5'-phosphate is required as a cofactor.

The enzyme catalyses L-histidinol phosphate + 2-oxoglutarate = 3-(imidazol-4-yl)-2-oxopropyl phosphate + L-glutamate. It participates in amino-acid biosynthesis; L-histidine biosynthesis; L-histidine from 5-phospho-alpha-D-ribose 1-diphosphate: step 7/9. This chain is Histidinol-phosphate aminotransferase 2, found in Pseudomonas fluorescens (strain ATCC BAA-477 / NRRL B-23932 / Pf-5).